The following is a 495-amino-acid chain: Glycerol kinase (495 aa).

Thr14 is a binding site for ADP. Thr14, Thr15, and Ser16 together coordinate ATP. Thr14 provides a ligand contact to sn-glycerol 3-phosphate. Position 18 (Arg18) interacts with ADP. Residues Arg84, Glu85, Tyr136, and Asp246 each coordinate sn-glycerol 3-phosphate. Residues Arg84, Glu85, Tyr136, Asp246, and Gln247 each contribute to the glycerol site. 2 residues coordinate ADP: Thr268 and Gly312. ATP is bound by residues Thr268, Gly312, Gln316, and Gly413. ADP-binding residues include Gly413 and Asn417.

The protein belongs to the FGGY kinase family.

It catalyses the reaction glycerol + ATP = sn-glycerol 3-phosphate + ADP + H(+). Its pathway is polyol metabolism; glycerol degradation via glycerol kinase pathway; sn-glycerol 3-phosphate from glycerol: step 1/1. Inhibited by fructose 1,6-bisphosphate (FBP). In terms of biological role, key enzyme in the regulation of glycerol uptake and metabolism. Catalyzes the phosphorylation of glycerol to yield sn-glycerol 3-phosphate. The chain is Glycerol kinase from Bdellovibrio bacteriovorus (strain ATCC 15356 / DSM 50701 / NCIMB 9529 / HD100).